Here is an 82-residue protein sequence, read N- to C-terminus: Protein transport protein Sec61 subunit beta (82 aa).

An N-acetylmethionine modification is found at Met-1. A disordered region spans residues 1–34; that stretch reads MVGSGAPQRGSAAATASMRRRKPTSGAGGGGASG. Over 1–55 the chain is Cytoplasmic; that stretch reads MVGSGAPQRGSAAATASMRRRKPTSGAGGGGASGGAAGSMLQFYTDDAPGLKISP. Residues 56–76 traverse the membrane as a helical segment; that stretch reads NVVLIMSIGFIAFVAVLHVMG.

It belongs to the SEC61-beta family. In terms of assembly, heterotrimeric complex composed of SEC61-alpha, SEC61-beta and SEC61-gamma.

It is found in the endoplasmic reticulum membrane. Functionally, necessary for protein translocation in the endoplasmic reticulum. The sequence is that of Protein transport protein Sec61 subunit beta from Arabidopsis thaliana (Mouse-ear cress).